The following is a 152-amino-acid chain: Large ribosomal subunit protein bL9 (152 aa).

It belongs to the bacterial ribosomal protein bL9 family.

In terms of biological role, binds to the 23S rRNA. The sequence is that of Large ribosomal subunit protein bL9 from Synechococcus sp. (strain CC9902).